Here is a 749-residue protein sequence, read N- to C-terminus: Photosystem I P700 chlorophyll a apoprotein A2 (749 aa).

Helical transmembrane passes span 46–69 (LFSTHFGHLAVIGLWVAGNLFHIA), 135–158 (LYQGAIFIDILVAWLLFGGWLHLQ), 175–199 (MNHHLAVLFGFTNIAWTGHLVHVAI), 273–291 (ISHHHIAIGVFMIIGGHMY), 343–366 (LHFQLGLALACLGTAASLVAHHMG), 382–408 (AALYTHHQYIAIFLMCGAFSHGAIFFV), 430–452 (ALISHLSWVCMLLGFHTLALYLH), and 532–550 (FLVHHGIALGLHTTALILI). [4Fe-4S] cluster contacts are provided by Cys-574 and Cys-583. 2 helical membrane-spanning segments follow: residues 590-611 (STYMAIFWALNTIAWATYYWHW) and 658-680 (LSPWAYMFLAGHLVWATGFMFLI). The divinyl chlorophyll a site is built by His-669, Met-677, and Tyr-685. Trp-686 is a phylloquinone binding site. Residues 722 to 742 (LVGVTHFAVGNIFTFGAFVIA) traverse the membrane as a helical segment.

Belongs to the PsaA/PsaB family. In terms of assembly, the PsaA/B heterodimer binds the P700 chlorophyll special pair and subsequent electron acceptors. PSI consists of a core antenna complex that captures photons, and an electron transfer chain that converts photonic excitation into a charge separation. The cyanobacterial PSI reaction center is composed of one copy each of PsaA,B,C,D,E,F,I,J,K,L,M and X, and forms trimeric complexes. PSI electron transfer chain: 5 divinyl chlorophyll a, 1 divinyl chlorophyll a', 2 phylloquinones and 3 4Fe-4S clusters. PSI core antenna: 90 divinyl chlorophyll a, 22 carotenoids, 3 phospholipids and 1 galactolipid. P700 is a divinyl chlorophyll a/divinyl chlorophyll a' dimer, A0 is one or more divinyl chlorophyll a, A1 is one or both phylloquinones and FX is a shared 4Fe-4S iron-sulfur center. is required as a cofactor.

The protein resides in the cellular thylakoid membrane. The enzyme catalyses reduced [plastocyanin] + hnu + oxidized [2Fe-2S]-[ferredoxin] = oxidized [plastocyanin] + reduced [2Fe-2S]-[ferredoxin]. PsaA and PsaB bind P700, the primary electron donor of photosystem I (PSI), as well as the electron acceptors A0, A1 and FX. PSI is a plastocyanin/cytochrome c6-ferredoxin oxidoreductase, converting photonic excitation into a charge separation, which transfers an electron from the donor P700 chlorophyll pair to the spectroscopically characterized acceptors A0, A1, FX, FA and FB in turn. Oxidized P700 is reduced on the lumenal side of the thylakoid membrane by plastocyanin or cytochrome c6. The sequence is that of Photosystem I P700 chlorophyll a apoprotein A2 from Prochlorococcus marinus (strain MIT 9313).